Consider the following 360-residue polypeptide: Hydroxyproline O-arabinosyltransferase RDN2 (360 aa).

A helical; Signal-anchor transmembrane segment spans residues 13-33 (VLGSSFATYNLVTMIIHYGSA).

The protein resides in the golgi apparatus membrane. It carries out the reaction trans-4-hydroxy-L-prolyl-[protein] + UDP-beta-L-arabinofuranose = O-(beta-L-arabinofuranosyl)-trans-4-hydroxy-L-prolyl-[protein] + UDP + H(+). Glycosyltransferase involved in the O-arabinosylation of several proteins including extensins and small signaling peptides. Catalyzes the transfer of the initial L-arabinose to the hydroxyl group of Hyp residues. Probably involved in the arabinosylation of CLAVATA3/ESR-related (CLE) signaling peptides that move from root to shoot, to interact with SUNN receptor kinase signaling that regulates nodulation. Involved in long distance nodulation signaling events. Involved in the autoregulation of nodulation (AON), a long distance systemic signaling from root to shoot and back again, which allows legumes to limit the number of root nodules formed based on available nitrogen and previous rhizobial colonization. Functions in the root, upstream of the shoot receptor kinase SUNN and via CLE peptide, to control AON. In Medicago truncatula (Barrel medic), this protein is Hydroxyproline O-arabinosyltransferase RDN2.